A 987-amino-acid chain; its full sequence is KAT8 regulatory NSL complex subunit 1-like protein (987 aa).

Lys-134 is covalently cross-linked (Glycyl lysine isopeptide (Lys-Gly) (interchain with G-Cter in SUMO2)). Ser-462 carries the post-translational modification Phosphoserine. Residues 708–738 are disordered; the sequence is RKKRHLSETALGERTKLEESDFQHTESGSHS. A compositionally biased stretch (basic and acidic residues) spans 718–731; that stretch reads LGERTKLEESDFQH. A PEHE domain is found at 794 to 915; the sequence is EILTPSWRMV…QSQETKSLWW (122 aa). Lys-859 is subject to N6-acetyllysine. Residues 949–972 form a disordered region; that stretch reads GEIFGTSVPENGHHPKKQSDGMEE. Basic and acidic residues predominate over residues 959-972; sequence NGHHPKKQSDGMEE.

In terms of processing, acetylated on lysine residues by KAT8 upon ionizing radiation-induced DNA damage; deacetylated by HDAC3.

This chain is KAT8 regulatory NSL complex subunit 1-like protein (KANSL1L), found in Homo sapiens (Human).